The sequence spans 392 residues: HORMA domain-containing protein 1 (392 aa).

Residues 25 to 227 (HQSLMFVKRL…TPFHTFRLKV (203 aa)) enclose the HORMA domain. Residues 323-359 (SELDVSESKTRSGKIFQSKMVNGNNQQGQTSKENRKR) form a disordered region. Over residues 341–353 (KMVNGNNQQGQTS) the composition is skewed to polar residues. Ser375 carries the phosphoserine modification. The Nuclear localization signal signature appears at 381–384 (KKRR).

In terms of assembly, interacts with HORMAD2. Interacts with IHO1. Phosphorylated at Ser-375 in a SPO11-dependent manner. In terms of tissue distribution, specifically expressed in meiotic germ cells.

It localises to the nucleus. It is found in the chromosome. Its subcellular location is the cytoplasm. In terms of biological role, plays a key role in meiotic progression. Regulates 3 different functions during meiosis: ensures that sufficient numbers of processed DNA double-strand breaks (DSBs) are available for successful homology search by increasing the steady-state numbers of single-stranded DSB ends. Promotes synaptonemal-complex formation independently of its role in homology search. Plays a key role in the male mid-pachytene checkpoint and the female meiotic prophase checkpoint: required for efficient build-up of ATR activity on unsynapsed chromosome regions, a process believed to form the basis of meiotic silencing of unsynapsed chromatin (MSUC) and meiotic prophase quality control in both sexes. This Mus musculus (Mouse) protein is HORMA domain-containing protein 1.